A 219-amino-acid polypeptide reads, in one-letter code: Ribose-5-phosphate isomerase A (219 aa).

Residues 28–31 (TGST), 81–84 (DGAD), and 94–97 (KGGG) each bind substrate. The active-site Proton acceptor is Glu103. Lys121 serves as a coordination point for substrate.

This sequence belongs to the ribose 5-phosphate isomerase family. In terms of assembly, homodimer.

The enzyme catalyses aldehydo-D-ribose 5-phosphate = D-ribulose 5-phosphate. Its pathway is carbohydrate degradation; pentose phosphate pathway; D-ribose 5-phosphate from D-ribulose 5-phosphate (non-oxidative stage): step 1/1. Its function is as follows. Catalyzes the reversible conversion of ribose-5-phosphate to ribulose 5-phosphate. In Shewanella frigidimarina (strain NCIMB 400), this protein is Ribose-5-phosphate isomerase A.